Consider the following 794-residue polypeptide: Striatin-3 (794 aa).

Position 1 is an N-acetylmethionine (methionine 1). The segment covering 1-12 (MDELAGGGGGQG) has biased composition (gly residues). The disordered stretch occupies residues 1 to 59 (MDELAGGGGGQGMAVPPRPQQGPGGNLSLPPGANGAPGGGGPPAAETAGPPAGPELSRP). The interval 70 to 78 (YIQHEWARF) is caveolin-binding. Positions 76 to 135 (ARFEMERAHWEVERAELQARIAFLQGERKGQENLKKDLVRRIKMLEYALKQERAKYHKLK) form a coiled coil. Phosphothreonine is present on threonine 149. A calmodulin-binding region spans residues 164–181 (QNSQLTWKQGRQLLRQYL). Serine 200, serine 212, serine 227, serine 255, and serine 332 each carry phosphoserine. Residues 309–339 (EDGEGAGEARSSGDGTEWDKDDLSPTAEVWD) form a disordered region. WD repeat units lie at residues 475 to 514 (SHFD…PAKK), 528 to 567 (AHIG…VDPY), 581 to 620 (AHTD…PCIC), 676 to 715 (QSSN…MIHS), 718 to 757 (AHLD…CVQE), and 764 to 794 (KLDE…KVFV).

This sequence belongs to the WD repeat striatin family. Tetramerizes. Part of the core of STRIPAK complexes composed of PP2A catalytic and scaffolding subunits, the striatins (PP2A regulatory subunits), the striatin-associated proteins MOB4, STRIP1 and STRIP2, PDCD10 and members of the STE20 kinases, such as STK24 and STK26. The STRIPAK complex can be extended by adapter proteins such as SLMAP:SIKE1 or CTTNBP2NL. Interacts with CDC42BPB.

Its subcellular location is the cytoplasm. It localises to the membrane. In terms of biological role, calmodulin-binding scaffolding protein which is the center of the striatin-interacting phosphatase and kinase (STRIPAK) complexes. STRIPAK complexes have critical roles in protein (de)phosphorylation and are regulators of multiple signaling pathways including Hippo, MAPK, nuclear receptor and cytoskeleton remodeling. Different types of STRIPAK complexes are involved in a variety of biological processes such as cell growth, differentiation, apoptosis, metabolism and immune regulation. The protein is Striatin-3 (Strn3) of Rattus norvegicus (Rat).